A 176-amino-acid polypeptide reads, in one-letter code: Glycine-rich RNA-binding protein 7 (176 aa).

N-acetylalanine is present on Ala-2. The segment at 2 to 41 is required for RNA chaperone activity; it reads ASGDVEYRCFVGGLAWATDDRALETAFAQYGDVIDSKIIN. The 79-residue stretch at 8–86 folds into the RRM domain; sequence YRCFVGGLAW…RSITVNEAQS (79 aa). Arg-49 is modified (ADP-ribosylarginine; by HopU1). The disordered stretch occupies residues 83 to 103; it reads EAQSRGSGGGGGHRGGGGGGY. Over residues 88 to 103 the composition is skewed to gly residues; that stretch reads GSGGGGGHRGGGGGGY. Residues 88–175 are glycine-rich (GR) required for cell-to-cell movement; that stretch reads GSGGGGGHRG…GYGGSGGGGG (88 aa). Positions 97 to 148 are nuclear targeting sequence (M9); that stretch reads GGGGGGYRSGGGGGYSGGGGSYGGGGGRREGGGGYSGGGGGYSSRGGGGGSY. Phosphoserine is present on residues Ser-105 and Ser-117. The disordered stretch occupies residues 131–176; the sequence is YSGGGGGYSSRGGGGGSYGGGRREGGGGYGGGEGGGYGGSGGGGGW.

It belongs to the GR-RBP family. As to quaternary structure, interacts with TRN1. Interacts with the Pseudomonas syringae type III effector HopU1. Binds to small phloem-mobile single-stranded RNAs (ss-sRNA, e.g. small interfering RNA (siRNA) and microRNA (miRNA)) in the phloeme exudate, including viral-derived sRNA (vsiRNA). In terms of processing, ADP-ribosylated by the Pseudomonas syringae type III effector HopU1. ADP-ribosylation reduces the ability of the protein to bind RNA. Ubiquitous with strong expression in guard cell.

Its subcellular location is the cytoplasm. It localises to the nucleus. It is found in the secreted. Functionally, plays a role in RNA transcription or processing during stress. Binds RNAs and DNAs sequence with a preference to single-stranded nucleic acids. Displays strong affinity to poly(U) and poly(G) sequence. Involved in mRNA alternative splicing of numerous targets by modulating splice site selection. Negatively regulates the circadian oscillations of its own transcript as well as RBG8 transcript. Forms an interlocked post-transcriptional negative feedback loop with the RBG8 autoregulatory circuit. Both proteins negatively autoregulate and reciprocally crossregulate by binding to their pre-mRNAs and promoting unproductive splicing coupled to degradation via the NMD pathway. Involved in the regulation of abscisic acid and stress responses. Affects the growth and stress tolerance under high salt and dehydration stress conditions, and also confers freezing tolerance, particularly via the regulation of stomatal opening and closing in the guard cells. Exhibits RNA chaperone activity during the cold adaptation process. Involved in the export of mRNAs from the nucleus to the cytoplasm under cold stress conditions. Target of the Pseudomonas syringae type III effector HopU1, which could probably be involved in plant innate immunity. Component of the flowering autonomous pathway which promotes floral transition, at least partly by down-regulating FLC. Mediates cell-to-cell trafficking of RNA interference (RNAi) signals (small RNAs (sRNA), e.g. small interfering RNA (siRNA) and microRNA (miRNA)) which regulate growth and development, as well as responses to environmental inputs, including pathogen attack; can compromise zucchini yellow mosaic virus (ZYMV) and tobacco rattle virus (TRV) infections at the early stage. In Arabidopsis thaliana (Mouse-ear cress), this protein is Glycine-rich RNA-binding protein 7.